A 549-amino-acid polypeptide reads, in one-letter code: Oxygen-dependent choline dehydrogenase (549 aa).

4–33 is a binding site for FAD; sequence DFVIIGSGSAGSALAYRLSEDGKNSVLVIE. Histidine 465 acts as the Proton acceptor in catalysis. Positions 530–549 are disordered; the sequence is PLARSNQEPWINPRAAVSDR.

Belongs to the GMC oxidoreductase family. FAD is required as a cofactor.

The catalysed reaction is choline + A = betaine aldehyde + AH2. It carries out the reaction betaine aldehyde + NAD(+) + H2O = glycine betaine + NADH + 2 H(+). It functions in the pathway amine and polyamine biosynthesis; betaine biosynthesis via choline pathway; betaine aldehyde from choline (cytochrome c reductase route): step 1/1. Its function is as follows. Involved in the biosynthesis of the osmoprotectant glycine betaine. Catalyzes the oxidation of choline to betaine aldehyde and betaine aldehyde to glycine betaine at the same rate. This Rhizobium etli (strain ATCC 51251 / DSM 11541 / JCM 21823 / NBRC 15573 / CFN 42) protein is Oxygen-dependent choline dehydrogenase.